Reading from the N-terminus, the 452-residue chain is Chaperone SurA (452 aa).

The N-terminal stretch at 1–28 is a signal peptide; the sequence is MKKTLRFAAVVSSLAASAALLVAAPAAA. PpiC domains lie at 186-288 and 302-400; these read QQDL…RLVD and IVQT…QVLN.

The protein resides in the periplasm. It catalyses the reaction [protein]-peptidylproline (omega=180) = [protein]-peptidylproline (omega=0). Functionally, chaperone involved in the correct folding and assembly of outer membrane proteins. Recognizes specific patterns of aromatic residues and the orientation of their side chains, which are found more frequently in integral outer membrane proteins. May act in both early periplasmic and late outer membrane-associated steps of protein maturation. This is Chaperone SurA from Burkholderia orbicola (strain AU 1054).